The primary structure comprises 78 residues: Large ribosomal subunit protein bL28 (78 aa).

It belongs to the bacterial ribosomal protein bL28 family.

The chain is Large ribosomal subunit protein bL28 from Hydrogenovibrio crunogenus (strain DSM 25203 / XCL-2) (Thiomicrospira crunogena).